Consider the following 281-residue polypeptide: Large ribosomal subunit protein uL22 (281 aa).

Positions 1–225 (MASPMGSTAS…KAGGAAEAEV (225 aa)) are large ribosomal subunit protein uL22. 2 disordered regions span residues 137–175 (RATK…PVAA) and 199–281 (AVAS…GGTR). Positions 139–153 (TKKAVPKGARHRRRL) are enriched in basic residues. Low complexity-rich tracts occupy residues 159-175 (PAAS…PVAA) and 199-239 (AVAS…APAA). The segment at 226 to 281 (ATTDEQTTETAPAAEAEKPAVRRPAARKSTTSARRRAAETEGHDSDAESTDEGGTR) is unknown. Basic and acidic residues predominate over residues 261–271 (RAAETEGHDSD). Positions 272–281 (AESTDEGGTR) are enriched in acidic residues.

Belongs to the universal ribosomal protein uL22 family. In terms of assembly, part of the 50S ribosomal subunit.

Its function is as follows. The globular domain of the protein is located near the polypeptide exit tunnel on the outside of the subunit, while an extended beta-hairpin is found that lines the wall of the exit tunnel in the center of the 70S ribosome. Functionally, this protein binds specifically to 23S rRNA; its binding is stimulated by other ribosomal proteins, e.g. L4, L17, and L20. It is important during the early stages of 50S assembly. It makes multiple contacts with different domains of the 23S rRNA in the assembled 50S subunit and ribosome. This chain is Large ribosomal subunit protein uL22, found in Acidothermus cellulolyticus (strain ATCC 43068 / DSM 8971 / 11B).